We begin with the raw amino-acid sequence, 759 residues long: Polyribonucleotide nucleotidyltransferase (759 aa).

Residues aspartate 522 and aspartate 528 each contribute to the Mg(2+) site. The KH domain maps to 588-647 (PRITTIKVPVDKIGEVIGPKGKMINSITEETGASISIEDDGTVFVGASNGEAAQAAIDKI). Positions 659 to 728 (GERFLGTVVK…NRGKISLVLV (70 aa)) constitute an S1 motif domain. The segment at 734 to 759 (AEASDNGSATPSDKAPATADATTAGN) is disordered. A compositionally biased stretch (low complexity) spans 741–759 (SATPSDKAPATADATTAGN).

It belongs to the polyribonucleotide nucleotidyltransferase family. The cofactor is Mg(2+).

It localises to the cytoplasm. The enzyme catalyses RNA(n+1) + phosphate = RNA(n) + a ribonucleoside 5'-diphosphate. Functionally, involved in mRNA degradation. Catalyzes the phosphorolysis of single-stranded polyribonucleotides processively in the 3'- to 5'-direction. This Mycobacterium sp. (strain JLS) protein is Polyribonucleotide nucleotidyltransferase.